We begin with the raw amino-acid sequence, 548 residues long: SH2/SH3 adapter protein dreadlocks (548 aa).

3 disordered regions span residues 12-37, 57-92, and 113-146; these read IPDS…QHQN, QVPV…TASS, and GSGS…MKHG. Residues 20 to 37 are compositionally biased toward low complexity; the sequence is QQYPQQQQHPPQLPQHQN. A compositionally biased stretch (gly residues) spans 113-122; sequence GSGSANGSGS. Positions 123–135 are enriched in low complexity; that stretch reads GNSSSGSAAGNAG. Positions 150 to 209 constitute an SH3 1 domain; that stretch reads DDVCYVVAKYDYAAQGAQELDLRKNERYLLLDDSKHWWRVQNSRNQSGYVPSNYVKKEKP. Positions 219-247 are disordered; the sequence is VKKGSGSKTLPNCSPSRQVESPTMSRRLP. A compositionally biased stretch (polar residues) spans 227 to 242; the sequence is TLPNCSPSRQVESPTM. 2 SH3 domains span residues 252–311 and 324–386; these read EAIG…EDCD and NVLD…ELND. A disordered region spans residues 398–442; the sequence is SAGNGNGGGSNGGAGGGGGNDSMERRNEGNKPAAQSSGQPIERPN. The span at 401 to 417 shows a compositional bias: gly residues; that stretch reads NGNGGGSNGGAGGGGGN. In terms of domain architecture, SH2 spans 448 to 542; the sequence is WYYGAITRSQ…GEKLYLVRSL (95 aa).

Interacts (via SH2 and SH3 domains) with Dscam1 (via cytoplasmic domain); the interaction is direct and requires Dscam1 to be phosphorylated. Interacts (via SH2 and SH3 domains) with InR/Insulin-like receptor (via C-terminal cytoplasmic region); the interaction requires InR kinase activity, probably for autophosphorylation stimulated by insulin signaling. Interacts with Ptp61F (via C-terminus); this interaction is independent of insulin stimulation. Interacts (via SH3 domain 2) with Pak (via N-terminal PXXP motif). In terms of processing, phosphorylated by Src42A and possibly by other tyrosine kinases. Constitutively dephosphorylated by its binding partner Ptp61F.

The protein localises to the perikaryon. It localises to the cell projection. It is found in the axon. The protein resides in the growth cone. In terms of biological role, adapter protein that links cell surface receptor tyrosine phosphorylation to downstream signaling pathways and effectors, many of which are involved in regulation of the actin cytoskeleton. Recruited by Dscam1/Down syndrome cell adhesion molecule homolog and InR/insulin-like receptor. Recruits Pak to membranes, probably when dock/dreadlocks is associated with activated receptors. Required for guidance and targeting of photoreceptor (R cell) axon projections but not for axon outgrowth, differentiation or target induction in the developing eye. As part of a signaling pathway that involves the lbm/late bloomer protein, involved in synapse formation of the RP3 motorneuron at the muscle 7/6 cleft, probably by stimulating axon defasciculation from other SNb neurons. The sequence is that of SH2/SH3 adapter protein dreadlocks from Drosophila melanogaster (Fruit fly).